We begin with the raw amino-acid sequence, 542 residues long: Calcium-dependent protein kinase 15 (542 aa).

The disordered stretch occupies residues 1-73; sequence MGARASRHRQ…QAPQQAAAED (73 aa). Residue G2 is the site of N-myristoyl glycine attachment. Low complexity predominate over residues 12-21; the sequence is PDQSQSQSPS. The segment covering 22–40 has biased composition (basic residues); sequence PHHKHHHHHQTTRAPKPKP. Residues 41-60 show a composition bias toward pro residues; sequence KPQPPPPQQPRSQPPPPPRH. Positions 61 to 71 are enriched in low complexity; the sequence is QPQQAPQQAAA. The region spanning 90–348 is the Protein kinase domain; sequence YTFGRELGRG…AAEILNHPWI (259 aa). Residues 96 to 104 and K119 each bind ATP; that span reads LGRGQFGVT. The active-site Proton acceptor is the D214. The segment at 354 to 384 is autoinhibitory domain; sequence APDKPLDITVISRMKQFRAMNKLKKVALKVV. 4 consecutive EF-hand domains span residues 391-426, 427-462, 463-497, and 498-533; these read EEIV…LGTK, ISES…MNRL, EKED…KYDM, and GDEA…NSPE. Ca(2+)-binding residues include D404, D406, S408, T410, E415, D440, D442, N444, S446, E451, D476, D478, S480, E487, D511, D513, D515, R517, and E522.

It belongs to the protein kinase superfamily. Ser/Thr protein kinase family. CDPK subfamily.

Its subcellular location is the membrane. It catalyses the reaction L-seryl-[protein] + ATP = O-phospho-L-seryl-[protein] + ADP + H(+). It carries out the reaction L-threonyl-[protein] + ATP = O-phospho-L-threonyl-[protein] + ADP + H(+). Its activity is regulated as follows. Activated by calcium. Autophosphorylation may play an important role in the regulation of the kinase activity. In terms of biological role, may play a role in signal transduction pathways that involve calcium as a second messenger. In Oryza sativa subsp. japonica (Rice), this protein is Calcium-dependent protein kinase 15.